Reading from the N-terminus, the 450-residue chain is Bifunctional protein GlmU (450 aa).

The pyrophosphorylase stretch occupies residues 1-228 (MSTALVILAA…EAQTLGVNSR (228 aa)). Residues 8–11 (LAAG), K22, Q75, 80–81 (GT), 103–105 (YGD), G140, E154, N169, and N226 contribute to the UDP-N-acetyl-alpha-D-glucosamine site. D105 provides a ligand contact to Mg(2+). A Mg(2+)-binding site is contributed by N226. A linker region spans residues 229–249 (ADLAAADAIFQTRARAELLDL). The N-acetyltransferase stretch occupies residues 250-450 (GVTLMAPETV…AKKASKQKET (201 aa)). UDP-N-acetyl-alpha-D-glucosamine-binding residues include R315 and K333. H345 serves as the catalytic Proton acceptor. Positions 348 and 359 each coordinate UDP-N-acetyl-alpha-D-glucosamine. Residues A362, 368–369 (NY), S387, T405, and R422 contribute to the acetyl-CoA site.

In the N-terminal section; belongs to the N-acetylglucosamine-1-phosphate uridyltransferase family. This sequence in the C-terminal section; belongs to the transferase hexapeptide repeat family. Homotrimer. It depends on Mg(2+) as a cofactor.

The protein resides in the cytoplasm. It carries out the reaction alpha-D-glucosamine 1-phosphate + acetyl-CoA = N-acetyl-alpha-D-glucosamine 1-phosphate + CoA + H(+). The enzyme catalyses N-acetyl-alpha-D-glucosamine 1-phosphate + UTP + H(+) = UDP-N-acetyl-alpha-D-glucosamine + diphosphate. It participates in nucleotide-sugar biosynthesis; UDP-N-acetyl-alpha-D-glucosamine biosynthesis; N-acetyl-alpha-D-glucosamine 1-phosphate from alpha-D-glucosamine 6-phosphate (route II): step 2/2. The protein operates within nucleotide-sugar biosynthesis; UDP-N-acetyl-alpha-D-glucosamine biosynthesis; UDP-N-acetyl-alpha-D-glucosamine from N-acetyl-alpha-D-glucosamine 1-phosphate: step 1/1. It functions in the pathway bacterial outer membrane biogenesis; LPS lipid A biosynthesis. Catalyzes the last two sequential reactions in the de novo biosynthetic pathway for UDP-N-acetylglucosamine (UDP-GlcNAc). The C-terminal domain catalyzes the transfer of acetyl group from acetyl coenzyme A to glucosamine-1-phosphate (GlcN-1-P) to produce N-acetylglucosamine-1-phosphate (GlcNAc-1-P), which is converted into UDP-GlcNAc by the transfer of uridine 5-monophosphate (from uridine 5-triphosphate), a reaction catalyzed by the N-terminal domain. This is Bifunctional protein GlmU from Ruegeria pomeroyi (strain ATCC 700808 / DSM 15171 / DSS-3) (Silicibacter pomeroyi).